The sequence spans 591 residues: Parathyroid hormone/parathyroid hormone-related peptide receptor (591 aa).

A signal peptide spans 1–26 (MGAARIAPSLALLLCCPVLSSAYALV). Topologically, residues 27–188 (DADDVFTKEE…REREVFDRLG (162 aa)) are extracellular. 3 cysteine pairs are disulfide-bonded: C48/C117, C108/C148, and C131/C170. The interval 67–104 (KGWTPASTSGKPRKEKASGKFYPESKENKDVPTGSRRR) is disordered. Over residues 81 to 96 (EKASGKFYPESKENKD) the composition is skewed to basic and acidic residues. Residues N151, N161, N166, and N176 are each glycosylated (N-linked (GlcNAc...) asparagine). The chain crosses the membrane as a helical span at residues 189-212 (MIYTVGYSMSLASLTVAVLILAYF). At 213 to 219 (RRLHCTR) the chain is on the cytoplasmic side. Residues 220 to 239 (NYIHMHMFLSFMLRAASIFV) form a helical membrane-spanning segment. At 240–282 (KDAVLYSGFTLDEAERLTEEELHIIAQVPPPPAAAAVGYAGCR) the chain is on the extracellular side. Residues 283-306 (VAVTFFLYFLATNYYWILVEGLYL) traverse the membrane as a helical segment. The Cytoplasmic portion of the chain corresponds to 307 to 320 (HSLIFMAFFSEKKY). The helical transmembrane segment at 321-342 (LWGFTIFGWGLPAVFVAVWVGV) threads the bilayer. At 343 to 361 (RATLANTGCWDLSSGHKKW) the chain is on the extracellular side. The chain crosses the membrane as a helical span at residues 362 to 382 (IIQVPILASVVLNFILFINII). At 383–409 (RVLATKLRETNAGRCDTRQQYRKLLRS) the chain is on the cytoplasmic side. A helical membrane pass occupies residues 410 to 428 (TLVLVPLFGVHYTVFMALP). At 429-440 (YTEVSGTLWQIQ) the chain is on the extracellular side. The chain crosses the membrane as a helical span at residues 441–463 (MHYEMLFNSFQGFFVAIIYCFCN). Residues 464-591 (GEVQAEIRKS…LLQEEWETVM (128 aa)) are Cytoplasmic-facing. Positions 474–477 (WSRW) match the Important for interaction with G proteins motif. The disordered stretch occupies residues 516-544 (LPLSPRLPPATTNGHSQLPGHAKPGAPAT).

Belongs to the G-protein coupled receptor 2 family. As to quaternary structure, homodimer in the absence of bound ligand. Peptide hormone binding leads to dissociation of the homodimer. In terms of processing, N-glycosylated.

The protein resides in the cell membrane. Its function is as follows. G-protein-coupled receptor for parathyroid hormone (PTH) and for parathyroid hormone-related peptide (PTHLH). Ligand binding causes a conformation change that triggers signaling via guanine nucleotide-binding proteins (G proteins) and modulates the activity of downstream effectors, such as adenylate cyclase (cAMP). PTH1R is coupled to G(s) G alpha proteins and mediates activation of adenylate cyclase activity. PTHLH dissociates from PTH1R more rapidly than PTH; as consequence, the cAMP response induced by PTHLH decays faster than the response induced by PTH. This Rattus norvegicus (Rat) protein is Parathyroid hormone/parathyroid hormone-related peptide receptor (Pth1r).